Here is a 356-residue protein sequence, read N- to C-terminus: S-adenosylmethionine:tRNA ribosyltransferase-isomerase (356 aa).

The protein belongs to the QueA family. Monomer.

The protein resides in the cytoplasm. The catalysed reaction is 7-aminomethyl-7-carbaguanosine(34) in tRNA + S-adenosyl-L-methionine = epoxyqueuosine(34) in tRNA + adenine + L-methionine + 2 H(+). It participates in tRNA modification; tRNA-queuosine biosynthesis. Its function is as follows. Transfers and isomerizes the ribose moiety from AdoMet to the 7-aminomethyl group of 7-deazaguanine (preQ1-tRNA) to give epoxyqueuosine (oQ-tRNA). This is S-adenosylmethionine:tRNA ribosyltransferase-isomerase from Citrobacter koseri (strain ATCC BAA-895 / CDC 4225-83 / SGSC4696).